The primary structure comprises 363 residues: MSSDLKQTPLYQNYVDRGAKIVEFGGWAMPVQFSSIKEEHNAVRYEIGLFDVSHMGEIEVTGKDASQFVQYLLSNDTDNLTTSKALYTALCNEEGGIIDDLVIYKLADDNYLLVVNAANTEKDFNWILKHKEKFDVEVQNVSNQYGQLAIQGPKARDLINQLVDEDVTEMKMFEFKQGVKLFGANVILSQSGYTGEDGFEIYCNIDDTEKIWDGLLEYNVMPCGLGARDTLRLEAGLPLHGQDLTESITPYEGGIAFASKPLIDADFIGKSVLKDQKENGAPRRTVGLELLEKGIARTGYEVMDLDGNIIGEVTSGTQSPSSGKSIALAMIKRDEFEMGRELLVQVRKRQLKAKIVKKNQIDK.

The protein belongs to the GcvT family. As to quaternary structure, the glycine cleavage system is composed of four proteins: P, T, L and H.

It carries out the reaction N(6)-[(R)-S(8)-aminomethyldihydrolipoyl]-L-lysyl-[protein] + (6S)-5,6,7,8-tetrahydrofolate = N(6)-[(R)-dihydrolipoyl]-L-lysyl-[protein] + (6R)-5,10-methylene-5,6,7,8-tetrahydrofolate + NH4(+). The glycine cleavage system catalyzes the degradation of glycine. This Staphylococcus aureus (strain N315) protein is Aminomethyltransferase.